The chain runs to 195 residues: ATP-dependent Clp protease proteolytic subunit (195 aa).

Residue Ser-101 is the Nucleophile of the active site. The active site involves His-126.

This sequence belongs to the peptidase S14 family. As to quaternary structure, component of the chloroplastic Clp protease core complex.

Its subcellular location is the plastid. It localises to the chloroplast stroma. It carries out the reaction Hydrolysis of proteins to small peptides in the presence of ATP and magnesium. alpha-casein is the usual test substrate. In the absence of ATP, only oligopeptides shorter than five residues are hydrolyzed (such as succinyl-Leu-Tyr-|-NHMec, and Leu-Tyr-Leu-|-Tyr-Trp, in which cleavage of the -Tyr-|-Leu- and -Tyr-|-Trp bonds also occurs).. Its function is as follows. Cleaves peptides in various proteins in a process that requires ATP hydrolysis. Has a chymotrypsin-like activity. Plays a major role in the degradation of misfolded proteins. This chain is ATP-dependent Clp protease proteolytic subunit, found in Cucumis sativus (Cucumber).